Consider the following 173-residue polypeptide: MPRSQKNDNFIDKTFTVLADIVLKILPTSKEEKEAFSYYRDGMSAQSEGEYAEALENYYEALKLEEDPYDRSYILYNIGLIYASNGEYIKALEYYHQGLELNFKLPQALNNIAVIYHYQGVQAVEEKNIELSKLMFDKAAQYWQQAIKLAPDNYIEAQNWLKTTGRMKNIQGY.

3 TPR repeats span residues 35–68 (AFSY…EEDP), 72–105 (SYIL…NFKL), and 120–153 (GVQA…APDN).

This sequence belongs to the Ycf3 family.

It is found in the plastid. The protein resides in the chloroplast thylakoid membrane. In terms of biological role, essential for the assembly of the photosystem I (PSI) complex. May act as a chaperone-like factor to guide the assembly of the PSI subunits. The protein is Photosystem I assembly protein Ycf3 of Porphyra purpurea (Red seaweed).